A 484-amino-acid polypeptide reads, in one-letter code: tRNA sulfurtransferase (484 aa).

Residues 63–167 (QAFGERLACI…RDNLYMVTKR (105 aa)) form the THUMP domain. Residues 185–186 (LI), lysine 267, glycine 289, and glutamine 298 each bind ATP. Cysteine 346 and cysteine 458 are disulfide-bonded. The 79-residue stretch at 406–484 (IDTNQVVIDI…GYTNVKVYRP (79 aa)) folds into the Rhodanese domain. Cysteine 458 (cysteine persulfide intermediate) is an active-site residue.

It belongs to the ThiI family.

It localises to the cytoplasm. It catalyses the reaction [ThiI sulfur-carrier protein]-S-sulfanyl-L-cysteine + a uridine in tRNA + 2 reduced [2Fe-2S]-[ferredoxin] + ATP + H(+) = [ThiI sulfur-carrier protein]-L-cysteine + a 4-thiouridine in tRNA + 2 oxidized [2Fe-2S]-[ferredoxin] + AMP + diphosphate. It carries out the reaction [ThiS sulfur-carrier protein]-C-terminal Gly-Gly-AMP + S-sulfanyl-L-cysteinyl-[cysteine desulfurase] + AH2 = [ThiS sulfur-carrier protein]-C-terminal-Gly-aminoethanethioate + L-cysteinyl-[cysteine desulfurase] + A + AMP + 2 H(+). It functions in the pathway cofactor biosynthesis; thiamine diphosphate biosynthesis. Its function is as follows. Catalyzes the ATP-dependent transfer of a sulfur to tRNA to produce 4-thiouridine in position 8 of tRNAs, which functions as a near-UV photosensor. Also catalyzes the transfer of sulfur to the sulfur carrier protein ThiS, forming ThiS-thiocarboxylate. This is a step in the synthesis of thiazole, in the thiamine biosynthesis pathway. The sulfur is donated as persulfide by IscS. The chain is tRNA sulfurtransferase from Shewanella baltica (strain OS155 / ATCC BAA-1091).